A 212-amino-acid polypeptide reads, in one-letter code: Cyclin-dependent kinase 2-interacting protein (212 aa).

N-acetylmethionine is present on M1. Phosphoserine is present on residues S69 and S73. The stretch at 73 to 107 forms a coiled coil; sequence SKENEEKVCLEYNEELEKLCEELQATLDGLTKIQV. S202 lines the Na(+) pocket.

This sequence belongs to the CINP family. In terms of assembly, homodimer. Part of the 55LCC heterohexameric ATPase complex composed at least of AIRIM, AFG2A, AFG2B and CINP. Interacts with AIRIM. Interacts with CDK2 and CDC7. Interacts with the components of the replication complex, MCM2, MCM3, MCM4, MCM5, MCM6, MCM7 and with ORC2-containing complexes. Interacts with ATRIP. Interacts with CEP152. Associates with pre-60S ribosomal particles. Post-translationally, phosphorylated by CDC7 but not by CDK2.

It is found in the nucleus. Its function is as follows. Component of the DNA replication complex, which interacts with two kinases, CDK2 and CDC7, thereby providing a functional and physical link between CDK2 and CDC7 during firing of the origins of replication. Regulates ATR-mediated checkpoint signaling in response to DNA damage. Part of the 55LCC heterohexameric ATPase complex which is chromatin-associated and promotes replisome proteostasis to maintain replication fork progression and genome stability. Required for replication fork progression, sister chromatid cohesion, and chromosome stability. The ATPase activity is specifically enhanced by replication fork DNA and is coupled to cysteine protease-dependent cleavage of replisome substrates in response to replication fork damage. Uses ATPase activity to process replisome substrates in S-phase, facilitating their proteolytic turnover from chromatin to ensure DNA replication and mitotic fidelity. As part of 55LCC complex, also involved in the cytoplasmic maturation steps of pre-60S ribosomal particles by promoting the release of shuttling protein RSL24D1/RLP24 from the pre-ribosomal particles. The chain is Cyclin-dependent kinase 2-interacting protein from Homo sapiens (Human).